A 301-amino-acid chain; its full sequence is Mitochondrial thiamine pyrophosphate carrier 1 (301 aa).

Solcar repeat units follow at residues 15 to 102, 115 to 200, and 206 to 293; these read VTPT…ISKS, SSAN…AREL, and RVPF…SLSF. 6 helical membrane passes run 20-38, 79-99, 121-141, 172-192, 207-227, and 252-272; these read ALVAGSIAGAISRAFTAPL, VPAEILYILYGGVQFGSYSII, LIVGIGSGIVSTLVTYPFDLL, IYAGIRPAMLSVSSTTGLMFW, VPFIEAICGFIAGATSKGITF, and IFVTILKNEGVFGLYKGFGIS.

The protein belongs to the mitochondrial carrier (TC 2.A.29) family.

The protein resides in the mitochondrion inner membrane. Mitochondrial transporter that mediates uptake of thiamine pyrophosphate (ThPP) into mitochondria. The protein is Mitochondrial thiamine pyrophosphate carrier 1 (TPC1) of Candida albicans (strain SC5314 / ATCC MYA-2876) (Yeast).